Consider the following 65-residue polypeptide: Putative beta-neurotoxin RjAa7 (65 aa).

One can recognise an LCN-type CS-alpha/beta domain in the interval K1–G64. Cystine bridges form between C11–C63, C15–C37, C22–C44, and C26–C46.

It belongs to the long (4 C-C) scorpion toxin superfamily. Sodium channel inhibitor family. Beta subfamily. In terms of tissue distribution, expressed by the venom gland.

The protein localises to the secreted. Beta toxins bind voltage-independently at site-4 of sodium channels (Nav) and shift the voltage of activation toward more negative potentials thereby affecting sodium channel activation and promoting spontaneous and repetitive firing. This chain is Putative beta-neurotoxin RjAa7, found in Rhopalurus junceus (Caribbean blue scorpion).